Consider the following 226-residue polypeptide: Protein TRI1 (226 aa).

The DEK-C domain occupies M1–G56. Positions Q83–S118 are disordered. The span at R91 to K110 shows a compositional bias: basic residues. A Phosphoserine modification is found at S113. Residues I119–N195 form the SWIB/MDM2 domain. Basic and acidic residues predominate over residues V200 to N218. Residues V200–G226 are disordered. Residues K201 and K215 each participate in a glycyl lysine isopeptide (Lys-Gly) (interchain with G-Cter in SUMO) cross-link. The residue at position 225 (S225) is a Phosphoserine.

It is found in the cytoplasm. Its subcellular location is the nucleus. The protein localises to the nucleolus. Its function is as follows. May be involved in transcription regulation. This chain is Protein TRI1 (TRI1), found in Saccharomyces cerevisiae (strain ATCC 204508 / S288c) (Baker's yeast).